The chain runs to 352 residues: Threonine synthase (352 aa).

Lysine 59 is subject to N6-(pyridoxal phosphate)lysine. Pyridoxal 5'-phosphate-binding positions include asparagine 85, 185 to 189 (GNAGN), and threonine 314.

Belongs to the threonine synthase family. Requires pyridoxal 5'-phosphate as cofactor.

The enzyme catalyses O-phospho-L-homoserine + H2O = L-threonine + phosphate. It functions in the pathway amino-acid biosynthesis; L-threonine biosynthesis; L-threonine from L-aspartate: step 5/5. Functionally, catalyzes the gamma-elimination of phosphate from L-phosphohomoserine and the beta-addition of water to produce L-threonine. The sequence is that of Threonine synthase (thrC) from Bacillus sp. (strain ULM1).